A 491-amino-acid polypeptide reads, in one-letter code: Monocarboxylate transport permease protein (491 aa).

A run of 13 helical transmembrane segments spans residues 7–27 (GTAL…GFVA), 55–75 (WFLV…PALV), 83–103 (FFAL…MPVL), 130–150 (LAVA…QLVG), 157–177 (ALGL…ALYT), 187–207 (LIAF…VALI), 246–266 (LALG…GIFA), 277–297 (AIML…GYMG), 322–342 (WFSG…AAVM), 374–396 (ITSL…QFAL), 400–422 (LLGG…TNWF), 427–447 (LLAG…DAGW), and 465–485 (GLLA…LLPA).

Belongs to the sodium:solute symporter (SSF) (TC 2.A.21) family.

The protein localises to the cell membrane. Inhibited by CCCP, but is apparently not affected by the concentration of sodium. In terms of biological role, low-affinity transporter of alanine and high-affinity transporter of lactate and pyruvate. Can also transport other monocarboxylates such as propionate, butyrate, alpha-hydroxybutyrate or acetate. May be proton coupled. Required for optimal growth on alanine or pyruvate and ammonia. The sequence is that of Monocarboxylate transport permease protein from Rhizobium johnstonii (strain DSM 114642 / LMG 32736 / 3841) (Rhizobium leguminosarum bv. viciae).